We begin with the raw amino-acid sequence, 81 residues long: Sec-independent protein translocase protein TatA (81 aa).

The chain crosses the membrane as a helical span at residues methionine 1–glycine 21. The interval asparagine 45–alanine 81 is disordered. The segment covering alanine 59–serine 75 has biased composition (basic and acidic residues).

It belongs to the TatA/E family. In terms of assembly, the Tat system comprises two distinct complexes: a TatABC complex, containing multiple copies of TatA, TatB and TatC subunits, and a separate TatA complex, containing only TatA subunits. Substrates initially bind to the TatABC complex, which probably triggers association of the separate TatA complex to form the active translocon.

The protein resides in the cell inner membrane. Its function is as follows. Part of the twin-arginine translocation (Tat) system that transports large folded proteins containing a characteristic twin-arginine motif in their signal peptide across membranes. TatA could form the protein-conducting channel of the Tat system. The polypeptide is Sec-independent protein translocase protein TatA (Sulfurimonas denitrificans (strain ATCC 33889 / DSM 1251) (Thiomicrospira denitrificans (strain ATCC 33889 / DSM 1251))).